We begin with the raw amino-acid sequence, 567 residues long: Cytochrome P450 monooxygenase 79 (567 aa).

Residues Glu-7–Thr-24 traverse the membrane as a helical segment. N-linked (GlcNAc...) asparagine glycans are attached at residues Asn-223 and Asn-279. Residue Cys-475 participates in heme binding.

This sequence belongs to the cytochrome P450 family. Heme serves as cofactor.

It localises to the membrane. The protein operates within secondary metabolite biosynthesis. In terms of biological role, cytochrome P450 monooxygenase that is able to use dehydroabietic acid as a substrate for oxidation. The protein is Cytochrome P450 monooxygenase 79 of Postia placenta (strain ATCC 44394 / Madison 698-R) (Brown rot fungus).